A 176-amino-acid polypeptide reads, in one-letter code: Peptide deformylase 2 (176 aa).

Fe cation is bound by residues Cys-99 and His-141. Glu-142 is an active-site residue. Position 145 (His-145) interacts with Fe cation.

Belongs to the polypeptide deformylase family. Fe(2+) is required as a cofactor.

The enzyme catalyses N-terminal N-formyl-L-methionyl-[peptide] + H2O = N-terminal L-methionyl-[peptide] + formate. Functionally, removes the formyl group from the N-terminal Met of newly synthesized proteins. Requires at least a dipeptide for an efficient rate of reaction. N-terminal L-methionine is a prerequisite for activity but the enzyme has broad specificity at other positions. The chain is Peptide deformylase 2 from Bordetella bronchiseptica (strain ATCC BAA-588 / NCTC 13252 / RB50) (Alcaligenes bronchisepticus).